The following is a 76-amino-acid chain: DNA-directed RNA polymerase subunit epsilon (76 aa).

The protein belongs to the RNA polymerase subunit epsilon family. In terms of assembly, RNAP is composed of a core of 2 alpha, a beta and a beta' subunit. The core is associated with a delta subunit, and at least one of epsilon or omega. When a sigma factor is associated with the core the holoenzyme is formed, which can initiate transcription.

The catalysed reaction is RNA(n) + a ribonucleoside 5'-triphosphate = RNA(n+1) + diphosphate. A non-essential component of RNA polymerase (RNAP). The protein is DNA-directed RNA polymerase subunit epsilon of Lactococcus lactis subsp. lactis (strain IL1403) (Streptococcus lactis).